We begin with the raw amino-acid sequence, 118 residues long: Large ribosomal subunit protein uL24 (118 aa).

This sequence belongs to the universal ribosomal protein uL24 family. Part of the 50S ribosomal subunit.

One of two assembly initiator proteins, it binds directly to the 5'-end of the 23S rRNA, where it nucleates assembly of the 50S subunit. In terms of biological role, one of the proteins that surrounds the polypeptide exit tunnel on the outside of the subunit. The protein is Large ribosomal subunit protein uL24 of Prochlorococcus marinus (strain MIT 9303).